We begin with the raw amino-acid sequence, 436 residues long: Trigger factor (436 aa).

The region spanning 163–248 (GDRVVLDFAG…VKEVAEGVLP (86 aa)) is the PPIase FKBP-type domain.

Belongs to the FKBP-type PPIase family. Tig subfamily.

It is found in the cytoplasm. It carries out the reaction [protein]-peptidylproline (omega=180) = [protein]-peptidylproline (omega=0). Involved in protein export. Acts as a chaperone by maintaining the newly synthesized protein in an open conformation. Functions as a peptidyl-prolyl cis-trans isomerase. In Bordetella pertussis (strain Tohama I / ATCC BAA-589 / NCTC 13251), this protein is Trigger factor.